The primary structure comprises 166 residues: uncharacterized protein (166 aa).

The next 3 helical transmembrane spans lie at 4–24, 101–121, and 146–166; these read LNIF…EASI, LITC…SEAI, and SWSS…QCFL.

It localises to the membrane. This is an uncharacterized protein from Saccharomyces cerevisiae (strain ATCC 204508 / S288c) (Baker's yeast).